The sequence spans 351 residues: MPSAPTWPALITTLIEGRHLSVSESTWAMRQVMRGEATPAQLGGLLVALRASGETVDEIVGFRDAVLEDALPLDADPRALDIVGTGGDPYGAVLNISSAASIVAASTGVPVIKHGNRGASSASGASDVLTALGIDLTIAPERVAAVLRETGITYAHAALFHPGFRHAAATRRELGISTLFNVLGPLCNPARPEASAVGVADLSRVPLMVGVFRTRGATALVYRGDDGIDKLTTTGHSHIWEVSRGAVTEHDLDPLELGIPRAPIEALLGEGVEENAEVIRRVLAGEPGPQRDVVLLNAAAGLEAFDLMGDPTRVQQPMARRLREKVTVAAEAVDSGRAAAKLEEWAAATRA.

5-phospho-alpha-D-ribose 1-diphosphate-binding positions include G84, 87–88 (GD), 95–98 (NISS), 113–121 (KHGNRGASS), and A125. G84 is an anthranilate binding site. S97 contacts Mg(2+). An anthranilate-binding site is contributed by N116. R171 is an anthranilate binding site. Mg(2+) is bound by residues D229 and K230.

It belongs to the anthranilate phosphoribosyltransferase family. Homodimer. Mg(2+) is required as a cofactor.

The catalysed reaction is N-(5-phospho-beta-D-ribosyl)anthranilate + diphosphate = 5-phospho-alpha-D-ribose 1-diphosphate + anthranilate. The protein operates within amino-acid biosynthesis; L-tryptophan biosynthesis; L-tryptophan from chorismate: step 2/5. Functionally, catalyzes the transfer of the phosphoribosyl group of 5-phosphorylribose-1-pyrophosphate (PRPP) to anthranilate to yield N-(5'-phosphoribosyl)-anthranilate (PRA). This chain is Anthranilate phosphoribosyltransferase, found in Clavibacter sepedonicus (Clavibacter michiganensis subsp. sepedonicus).